The following is a 240-amino-acid chain: Mitochondrial transcription rescue factor 1 (240 aa).

A mitochondrion-targeting transit peptide spans 1-84 (MAMASVKLLA…ECIFPFSVRL (84 aa)). The interval 95–127 (KKSLQKVDEEDSDEESHHDEMSEQEEELEDDPT) is disordered. A phosphoserine mark is found at serine 106 and serine 116. The segment covering 116 to 126 (SEQEEELEDDP) has biased composition (acidic residues). The S4 RNA-binding domain maps to 142 to 217 (FRYDVVLKTG…LKKVFEEKTE (76 aa)).

As to quaternary structure, monomer. Interacts with POLRMT. Interacts (via S4 domain) with MTRFR (via C-terminus). Associates with mitoribosomal S39 large subunit, peptidyl tRNA and nascent chain.

The protein localises to the mitochondrion matrix. Mitochondrial RNA-binding protein involved in mitochondrial transcription regulation. Functions as a protective factor to maintain proper mitochondrial RNA level during stress. Acts at the transcription level and its protective function depends on its RNA binding ability. Part of a mitoribosome-associated quality control pathway that prevents aberrant translation by responding to interruptions during elongation. As heterodimer with MTRF, ejects the unfinished nascent chain and peptidyl transfer RNA (tRNA), respectively, from stalled ribosomes. Recruitment of mitoribosome biogenesis factors to these quality control intermediates suggests additional roles for MTRES1 and MTRF during mitoribosome rescue. This Homo sapiens (Human) protein is Mitochondrial transcription rescue factor 1.